The chain runs to 210 residues: NADH dehydrogenase [ubiquinone] iron-sulfur protein 8, mitochondrial (210 aa).

The N-terminal 34 residues, 1-34 (MRCLTMPTLLRALAQAAHTGPPGGRTLHSSAVAA), are a transit peptide targeting the mitochondrion. 2 4Fe-4S ferredoxin-type domains span residues 102 to 131 (RRYP…IEAE) and 141 to 170 (TRYD…EGPN). The [4Fe-4S] cluster site is built by C111, C114, C117, C121, C150, C153, C156, and C160.

It belongs to the complex I 23 kDa subunit family. Core subunit of respiratory chain NADH dehydrogenase (Complex I) which is composed of 45 different subunits. This is a component of the iron-sulfur (IP) fragment of the enzyme. Interacts with RAB5IF. It depends on [4Fe-4S] cluster as a cofactor.

The protein localises to the mitochondrion inner membrane. The enzyme catalyses a ubiquinone + NADH + 5 H(+)(in) = a ubiquinol + NAD(+) + 4 H(+)(out). Core subunit of the mitochondrial membrane respiratory chain NADH dehydrogenase (Complex I) which catalyzes electron transfer from NADH through the respiratory chain, using ubiquinone as an electron acceptor. Essential for the catalytic activity and assembly of complex I. This chain is NADH dehydrogenase [ubiquinone] iron-sulfur protein 8, mitochondrial (NDUFS8), found in Macaca fascicularis (Crab-eating macaque).